The following is a 249-amino-acid chain: DNA repair protein RecO (249 aa).

This sequence belongs to the RecO family.

Its function is as follows. Involved in DNA repair and RecF pathway recombination. The polypeptide is DNA repair protein RecO (Polaromonas naphthalenivorans (strain CJ2)).